A 513-amino-acid polypeptide reads, in one-letter code: GMP synthase [glutamine-hydrolyzing] (513 aa).

One can recognise a Glutamine amidotransferase type-1 domain in the interval 9–198 (LILVLDFGSQ…VRRVCDCKGQ (190 aa)). The active-site Nucleophile is C86. Catalysis depends on residues H172 and E174. A GMPS ATP-PPase domain is found at 199-388 (WTMENFIEIE…LGIPEHLVWR (190 aa)). An ATP-binding site is contributed by 226–232 (SGGVDSS).

Homodimer.

The catalysed reaction is XMP + L-glutamine + ATP + H2O = GMP + L-glutamate + AMP + diphosphate + 2 H(+). The protein operates within purine metabolism; GMP biosynthesis; GMP from XMP (L-Gln route): step 1/1. Functionally, catalyzes the synthesis of GMP from XMP. In Staphylococcus aureus (strain Mu3 / ATCC 700698), this protein is GMP synthase [glutamine-hydrolyzing].